Reading from the N-terminus, the 145-residue chain is Large ribosomal subunit protein uL16 (145 aa).

It belongs to the universal ribosomal protein uL16 family. Part of the 50S ribosomal subunit.

Its function is as follows. Binds 23S rRNA and is also seen to make contacts with the A and possibly P site tRNAs. The sequence is that of Large ribosomal subunit protein uL16 from Herpetosiphon aurantiacus (strain ATCC 23779 / DSM 785 / 114-95).